Consider the following 310-residue polypeptide: Thioredoxin reductase (310 aa).

Residue 34–41 participates in FAD binding; sequence NGMQPGGQ. A disulfide bond links C135 and C138. 281-290 contacts FAD; it reads DVQDKIYRQA.

It belongs to the class-II pyridine nucleotide-disulfide oxidoreductase family. As to quaternary structure, homodimer. FAD is required as a cofactor.

The protein localises to the cytoplasm. It catalyses the reaction [thioredoxin]-dithiol + NADP(+) = [thioredoxin]-disulfide + NADPH + H(+). This Rickettsia felis (strain ATCC VR-1525 / URRWXCal2) (Rickettsia azadi) protein is Thioredoxin reductase (trxB).